The sequence spans 782 residues: Spastin (782 aa).

Residues 1-103 (MVRTKNQSSS…GNAPRGGNSS (103 aa)) form a disordered region. Over 1–115 (MVRTKNQSSS…KQNLYVVSFP (115 aa)) the chain is Cytoplasmic. The required for localization to punctate cytoplasmic foci stretch occupies residues 1–212 (MVRTKNQSSS…RAIQPLEMAG (212 aa)). Residues 8-19 (SSSSSASSSTKS) show a composition bias toward low complexity. The segment covering 25-34 (GGTTNRSRSC) has biased composition (polar residues). Low complexity-rich tracts occupy residues 44 to 75 (SKSS…GSSP) and 84 to 93 (TTDADLTPTS). Positions 116 to 136 (IIFLFNVLRSLIYQLFCIFRY) form an intramembrane region, helical. At 137–782 (LYGASTKVIY…WSQDYGDITI (646 aa)) the chain is on the cytoplasmic side. A sufficient for interaction with microtubules and microtubule severing region spans residues 210 to 782 (MAGNRAGGNY…WSQDYGDITI (573 aa)). The 76-residue stretch at 235-310 (HRRAFEYISK…SMARDRLHFL (76 aa)) folds into the MIT domain. The interval 325 to 479 (KEQQQKKKSP…GSGSGASTPM (155 aa)) is disordered. Residues 334 to 343 (PQQQPQQQQQ) are compositionally biased toward low complexity. 2 stretches are compositionally biased toward polar residues: residues 408 to 426 (NKSQ…STSV) and 447 to 463 (QFSS…RTPI). The interval 465 to 479 (NNAAGGSGSGASTPM) is required for interaction with microtubules. An ATP-binding site is contributed by 547–554 (GPPGNGKT).

This sequence belongs to the AAA ATPase family. Spastin subfamily. As to quaternary structure, homohexamer. The homohexamer is stabilized by ATP-binding. The homohexamer may adopt a ring conformation through which microtubules pass prior to being severed. Interacts with microtubules. Interacts with atl; may be involved in microtubule dynamics.

It localises to the membrane. The protein localises to the cytoplasm. Its subcellular location is the cytoskeleton. It is found in the microtubule organizing center. The protein resides in the centrosome. It localises to the chromosome. The protein localises to the lipid droplet. The enzyme catalyses n ATP + n H2O + a microtubule = n ADP + n phosphate + (n+1) alpha/beta tubulin heterodimers.. Its function is as follows. ATP-dependent microtubule severing protein. Stimulates microtubule minus-end depolymerization and poleward microtubule flux in the mitotic spindle. Regulates microtubule stability in the neuromuscular junction synapse. Involved in lipid metabolism by regulating the size and distribution of lipid droplets. Involved in axon regeneration by regulating microtubule severing. The polypeptide is Spastin (Drosophila grimshawi (Hawaiian fruit fly)).